The sequence spans 124 residues: Large-conductance mechanosensitive channel (124 aa).

2 consecutive transmembrane segments (helical) span residues 15–35 and 67–87; these read MDLA…NSLV and GSFL…FFLI.

This sequence belongs to the MscL family. As to quaternary structure, homopentamer.

Its subcellular location is the cell membrane. Its function is as follows. Channel that opens in response to stretch forces in the membrane lipid bilayer. May participate in the regulation of osmotic pressure changes within the cell. The polypeptide is Large-conductance mechanosensitive channel (Lactobacillus johnsonii (strain CNCM I-12250 / La1 / NCC 533)).